We begin with the raw amino-acid sequence, 304 residues long: MWRGRDVISARDFGRRDLEELFETARYMEKYSKSRLEFLRGRVMAVAFFEPSTRTRLSFEVAMRRLGGDVIGFWGAEGTSVEKGETLVDTVKMLDAYSDVIVVRHRYEGASKLAAEVAESPVINGGDGAFNHPTQAMLDVYTMWREFGTVDGLNVGLIGDLRHARTVNSLLETLTNFRVRVYLISPEYLRPRVETIDYVQSRGLKLSFHTNVEEVIHELDVLYVVRIQKERFIDPLEYEKVKGSYRITVDMLKNARRHLIILHPLPRVDEIDHRVDATPHARYFRQAALGVPLRMALLYLILQS.

The carbamoyl phosphate site is built by Arg-54 and Thr-55. Lys-83 provides a ligand contact to L-aspartate. Positions 104, 132, and 135 each coordinate carbamoyl phosphate. Arg-165 and Arg-226 together coordinate L-aspartate. Residues Leu-265 and Pro-266 each coordinate carbamoyl phosphate.

Belongs to the aspartate/ornithine carbamoyltransferase superfamily. ATCase family. Heterooligomer of catalytic and regulatory chains.

It catalyses the reaction carbamoyl phosphate + L-aspartate = N-carbamoyl-L-aspartate + phosphate + H(+). It participates in pyrimidine metabolism; UMP biosynthesis via de novo pathway; (S)-dihydroorotate from bicarbonate: step 2/3. Its function is as follows. Catalyzes the condensation of carbamoyl phosphate and aspartate to form carbamoyl aspartate and inorganic phosphate, the committed step in the de novo pyrimidine nucleotide biosynthesis pathway. This is Aspartate carbamoyltransferase catalytic subunit from Pyrobaculum neutrophilum (strain DSM 2338 / JCM 9278 / NBRC 100436 / V24Sta) (Thermoproteus neutrophilus).